The chain runs to 151 residues: Ribonuclease H (151 aa).

The region spanning 1–141 is the RNase H type-1 domain; that stretch reads MQEVTVYSDG…ADALANKGVE (141 aa). Residues Asp-9, Glu-47, Asp-69, and Asp-133 each coordinate Mg(2+).

This sequence belongs to the RNase H family. Monomer. The cofactor is Mg(2+).

It is found in the cytoplasm. It catalyses the reaction Endonucleolytic cleavage to 5'-phosphomonoester.. Functionally, endonuclease that specifically degrades the RNA of RNA-DNA hybrids. The sequence is that of Ribonuclease H from Ralstonia nicotianae (strain ATCC BAA-1114 / GMI1000) (Ralstonia solanacearum).